A 399-amino-acid polypeptide reads, in one-letter code: MQLENIKKLQDLDVKGKTVLVRVDYNVPLKDGKVDNNKRIVASEKTVKYLLDNNCKVVLMSHLGRPKGKVASEFSLAPVATEVANVFGVKVHFASDCIGEPAAKTIAEAKNGEIVLLENLRFHPEEEKNDETFAAQLAKNGEVFVQEAFGTVHRAHASTSAVTKFLNGGIGYLVQKEVQFLGDALAKPNRPFAAIIGGAKVSDKIMVLNTLLSKVNVLVIGGGMAYTFLKAQGYTTGKSLLEEDKVEEANKILATAKEKGVEILLPVDHVCSTEFSNESPVMTTENANIPEGQMGLDIGPKTIALFDKKLLECKTIFWNGPVGVFEMSNFEKGSFAIASSMVEATKLGATTIIGGGDSLNVLKKAKIKTDLLSHCSTGGGASMEFVEGKELPGLTALAK.

Residues 24-26 (DYN), Arg39, 62-65 (HLGR), Arg121, and Arg154 contribute to the substrate site. Residues Lys204, Gly295, Glu326, and 355–358 (GGDS) each bind ATP.

This sequence belongs to the phosphoglycerate kinase family. Monomer.

Its subcellular location is the cytoplasm. It carries out the reaction (2R)-3-phosphoglycerate + ATP = (2R)-3-phospho-glyceroyl phosphate + ADP. The protein operates within carbohydrate degradation; glycolysis; pyruvate from D-glyceraldehyde 3-phosphate: step 2/5. The sequence is that of Phosphoglycerate kinase from Elusimicrobium minutum (strain Pei191).